The primary structure comprises 189 residues: Phomopsin biosynthesis cluster protein D (189 aa).

It belongs to the oryJ family.

Functionally, part of the gene cluster that mediates the biosynthesis of the phomopsins, a group of hexapeptide mycotoxins which infects lupins and causes lupinosis disease in livestock. The role of phomC within the phomopsins biosynthesis pathway has still to be determined. The pathway starts with the processing of the precursor phomA by several endopeptidases including kexin proteases as well as the cluster-specific S41 family peptidase phomP1 and the oligopeptidase phomG to produce 10 identical copies of the hexapeptide Tyr-Val-Ile-Pro-Ile-Asp. After being excised from the precursor peptide, the core peptides are cyclized and modified post-translationally by enzymes encoded within the gene cluster. The timing and order of proteolysis of the phomA precursor and PTMs are still unknown. Two tyrosinase-like enzymes, phomQ1 and phomQ2, catalyze the chlorination and hydroxylation of Tyr, respectively. PhomYb, is proposed to be involved in the construction of the macrocyclic structure. The other 4 ustYa family proteins may be involved in PTMs that generate the unique structure of phomopsin A. PhomYa is required for the hydroxylation of C-beta of Tyr. PhomYc, phomYd, and phomYe are responsible for the biosynthesis of 2,3-dehydroisoleucine (dIle), 2,3-dehydroaspartic acid (dAsp), and 3,4-dehydroproline (dPro), respectively. While dIle formation by phomYc is indispensable for the installation of dAsp by phomYd, the order of the other PTMs have not been elucidated yet. Most of the biosynthetic enzymes likely have broad substrate specificity, and thus, there might be a metabolic grid from a precursor to phomopsin A. The enzyme(s) responsible for the biosynthesis of 3,4-dehydrovaline (dVal) have also not been identified yet. Finally, phomM acts as an S-adenosylmethionine-dependent alpha-N-methyltransferase that catalyzes two successive N-methylation reactions, converting N-desmethyl-phomopsin A to phomopsin A and phomopsin A further to an N,N-dimethylated congener called phomopsin E. In Diaporthe leptostromiformis (Lupinosis disease fungus), this protein is Phomopsin biosynthesis cluster protein D.